Here is a 124-residue protein sequence, read N- to C-terminus: Ragulator complex protein LAMTOR3 homolog (124 aa).

Belongs to the LAMTOR3 family. In terms of assembly, part of the Ragulator complex composed of Lamtor3, Lamtor2, CG14184, CG14812, and Lamtor4.

Its function is as follows. Regulator of the TOR pathway, a signaling cascade that promotes cell growth in response to growth factors, energy levels, and amino acids. As part of the Ragulator complex, may activate the TOR signaling cascade in response to amino acids. The sequence is that of Ragulator complex protein LAMTOR3 homolog from Drosophila melanogaster (Fruit fly).